Consider the following 362-residue polypeptide: Chorismate synthase (362 aa).

Residues Arg-48 and Arg-54 each contribute to the NADP(+) site. Residues 131 to 133 (RSS), 243 to 244 (NA), Gly-287, 302 to 306 (KPTSS), and Arg-328 each bind FMN.

The protein belongs to the chorismate synthase family. In terms of assembly, homotetramer. FMNH2 serves as cofactor.

The enzyme catalyses 5-O-(1-carboxyvinyl)-3-phosphoshikimate = chorismate + phosphate. It functions in the pathway metabolic intermediate biosynthesis; chorismate biosynthesis; chorismate from D-erythrose 4-phosphate and phosphoenolpyruvate: step 7/7. In terms of biological role, catalyzes the anti-1,4-elimination of the C-3 phosphate and the C-6 proR hydrogen from 5-enolpyruvylshikimate-3-phosphate (EPSP) to yield chorismate, which is the branch point compound that serves as the starting substrate for the three terminal pathways of aromatic amino acid biosynthesis. This reaction introduces a second double bond into the aromatic ring system. The sequence is that of Chorismate synthase from Rhodopseudomonas palustris (strain BisB18).